Consider the following 595-residue polypeptide: NADH-quinone oxidoreductase subunit C/D (595 aa).

Residues 1–186 (MAETDIAMPE…TPYMQDKAKQ (186 aa)) are NADH dehydrogenase I subunit C. The NADH dehydrogenase I subunit D stretch occupies residues 210-595 (DFMFLNLGPN…IDVVMADVDR (386 aa)).

This sequence in the N-terminal section; belongs to the complex I 30 kDa subunit family. It in the C-terminal section; belongs to the complex I 49 kDa subunit family. In terms of assembly, NDH-1 is composed of 13 different subunits. Subunits NuoB, CD, E, F, and G constitute the peripheral sector of the complex.

Its subcellular location is the cell inner membrane. It catalyses the reaction a quinone + NADH + 5 H(+)(in) = a quinol + NAD(+) + 4 H(+)(out). Functionally, NDH-1 shuttles electrons from NADH, via FMN and iron-sulfur (Fe-S) centers, to quinones in the respiratory chain. The immediate electron acceptor for the enzyme in this species is believed to be ubiquinone. Couples the redox reaction to proton translocation (for every two electrons transferred, four hydrogen ions are translocated across the cytoplasmic membrane), and thus conserves the redox energy in a proton gradient. The sequence is that of NADH-quinone oxidoreductase subunit C/D from Acinetobacter baumannii (strain AYE).